A 725-amino-acid polypeptide reads, in one-letter code: N-alpha-acetyltransferase 35, NatC auxiliary subunit (725 aa).

Serine 187 carries the post-translational modification Phosphoserine. Positions 548–573 (ERIMEEQQKGRSSKKTKKKKKVRPLS) are disordered. Positions 558-571 (RSSKKTKKKKKVRP) are enriched in basic residues.

This sequence belongs to the MAK10 family. Component of the N-terminal acetyltransferase C (NatC) complex, which is composed of NAA35, NAA38 and NAA30.

Its subcellular location is the cytoplasm. Functionally, auxillary component of the N-terminal acetyltransferase C (NatC) complex which catalyzes acetylation of N-terminal methionine residues. N-terminal acetylation protects proteins from ubiquitination and degradation by the N-end rule pathway. Involved in regulation of apoptosis and proliferation of smooth muscle cells. The protein is N-alpha-acetyltransferase 35, NatC auxiliary subunit (NAA35) of Homo sapiens (Human).